A 163-amino-acid polypeptide reads, in one-letter code: Protein-export protein SecB (163 aa).

This sequence belongs to the SecB family. As to quaternary structure, homotetramer, a dimer of dimers. One homotetramer interacts with 1 SecA dimer.

Its subcellular location is the cytoplasm. In terms of biological role, one of the proteins required for the normal export of preproteins out of the cell cytoplasm. It is a molecular chaperone that binds to a subset of precursor proteins, maintaining them in a translocation-competent state. It also specifically binds to its receptor SecA. The sequence is that of Protein-export protein SecB from Azotobacter vinelandii (strain DJ / ATCC BAA-1303).